Consider the following 421-residue polypeptide: Phosphoglycerate kinase, cytosolic (421 aa).

Residues V23, D24, F25, N26, R39, S61, H62, G64, R65, R135, H172, and R173 each coordinate (2R)-3-phosphoglycerate. The ADP site is built by G218 and A219. G218 contacts CDP. AMP-binding residues include A219 and K220. A219 contacts ATP. A219 is a binding site for Mg(2+). A (2R)-3-phosphoglycerate-binding site is contributed by K220. D223 lines the CDP pocket. Residue D223 coordinates Mg(2+). Positions 224 and 242 each coordinate ADP. K224 serves as a coordination point for AMP. K224 provides a ligand contact to ATP. G242 contributes to the CDP binding site. A243 and A315 together coordinate AMP. Residues A243 and A315 each coordinate ATP. ADP is bound by residues A315 and N339. 2 residues coordinate CDP: G340 and F345. ADP-binding residues include F345, E346, D378, and S379. E346 is an AMP binding site. ATP is bound by residues E346, D378, and S379. D378 contributes to the Mg(2+) binding site.

It belongs to the phosphoglycerate kinase family. Monomer. It depends on Mg(2+) as a cofactor.

The protein resides in the cytoplasm. The enzyme catalyses (2R)-3-phosphoglycerate + ATP = (2R)-3-phospho-glyceroyl phosphate + ADP. It functions in the pathway carbohydrate degradation; glycolysis; pyruvate from D-glyceraldehyde 3-phosphate: step 2/5. This chain is Phosphoglycerate kinase, cytosolic, found in Trypanosoma brucei brucei.